The following is a 243-amino-acid chain: Uroporphyrinogen-III C-methyltransferase (243 aa).

S-adenosyl-L-homocysteine-binding positions include proline 12, 88–90 (SGD), 118–119 (ST), methionine 166, and alanine 195.

Belongs to the precorrin methyltransferase family.

The catalysed reaction is uroporphyrinogen III + 2 S-adenosyl-L-methionine = precorrin-2 + 2 S-adenosyl-L-homocysteine + H(+). Its pathway is cofactor biosynthesis; adenosylcobalamin biosynthesis; precorrin-2 from uroporphyrinogen III: step 1/1. It participates in porphyrin-containing compound metabolism; siroheme biosynthesis; precorrin-2 from uroporphyrinogen III: step 1/1. Functionally, catalyzes the two successive C-2 and C-7 methylation reactions involved in the conversion of uroporphyrinogen III to precorrin-2 via the intermediate formation of precorrin-1. It is a step in the biosynthesis of both cobalamin (vitamin B12) and siroheme. This chain is Uroporphyrinogen-III C-methyltransferase, found in Synechococcus elongatus (strain ATCC 33912 / PCC 7942 / FACHB-805) (Anacystis nidulans R2).